We begin with the raw amino-acid sequence, 615 residues long: Prolycopene isomerase, chloroplastic (615 aa).

A chloroplast-targeting transit peptide spans 1–62 (MSTSIFETPL…PKPLNFGFCR (62 aa)).

It belongs to the carotenoid/retinoid oxidoreductase family. CrtISO subfamily. NAD(+) serves as cofactor. Requires NADP(+) as cofactor. FAD is required as a cofactor.

It is found in the plastid. It localises to the chloroplast membrane. The enzyme catalyses 7,7',9,9'-tetra-cis-lycopene = all-trans-lycopene. It participates in carotenoid biosynthesis; lycopene biosynthesis. Its function is as follows. Carotene cis-trans-isomerase that converts 7,9,9'-tri-cis-neurosporene to 9'-cis-neurosporene and 7,9,9',7'-tetra-cis-lycopene (also known as prolycopene) into all-trans-lycopene. Isomerization requires redox-active components, suggesting that isomerization is achieved by a reversible redox reaction acting at specific double bonds. Isomerizes adjacent cis-double bonds at C7 and C9 pairwise into the trans-configuration, but is incapable of isomerizing single cis-double bonds at C9 and C9'. The chain is Prolycopene isomerase, chloroplastic (CRTISO) from Daucus carota (Wild carrot).